A 314-amino-acid polypeptide reads, in one-letter code: BRCA2 and CDKN1A-interacting protein (314 aa).

Residues 1–56 (MASRSKRRAVESGVPQPPDPPVQRDEEEEKEVENEDEDDDDSDKEKDEEDEVIDEE) are disordered. Residues 25–56 (DEEEEKEVENEDEDDDDSDKEKDEEDEVIDEE) show a composition bias toward acidic residues. 2 positions are modified to phosphoserine: serine 42 and serine 112. The interaction with BRCA2 stretch occupies residues 59–167 (IEFEAYSLSD…EKSMVEQLDK (109 aa)). Residues 161–259 (MVEQLDKFLN…NAEEEFFYEK (99 aa)) are interaction with CDKN1A. Serine 281 carries the phosphoserine modification.

It belongs to the BCP1 family. As to quaternary structure, interacts with BRCA2, CDKN1A and MTDH/LYRIC. Isoform 2/alpha, but not isoform 1/beta, interacts with DCTN1/p150-glued and ACTR1A/ARP1. Both isoform 1 and isoform 2 interact with alpha-, beta- and gamma-tubulins. Interacts with TENT5C; the interaction has no effect on TENT5C poly(A) polymerase function. As to expression, expressed at high levels in testis and skeletal muscle and at lower levels in brain, heart, kidney, liver, lung, ovary, pancreas, placenta, and spleen.

It is found in the nucleus. The protein localises to the cytoplasm. Its subcellular location is the cytoskeleton. The protein resides in the microtubule organizing center. It localises to the centrosome. It is found in the centriole. The protein localises to the spindle pole. In terms of biological role, during interphase, required for microtubule organizing and anchoring activities. During mitosis, required for the organization and stabilization of the spindle pole. Isoform 2/alpha is particularly important for the regulation of microtubule anchoring, microtubule stability, spindle architecture and spindle orientation, compared to isoform 1/beta. May promote cell cycle arrest by enhancing the inhibition of CDK2 activity by CDKN1A. May be required for repair of DNA damage by homologous recombination in conjunction with BRCA2. May not be involved in non-homologous end joining (NHEJ). This is BRCA2 and CDKN1A-interacting protein (BCCIP) from Homo sapiens (Human).